The chain runs to 609 residues: UvrABC system protein C (609 aa).

The GIY-YIG domain occupies 13–91 (HQPGVYRMFD…IKAFQPRYNV (79 aa)). One can recognise a UVR domain in the interval 201–236 (QQVLEHLIKKMEQASMQLNFEQAAYFRDQIQAIRAV).

The protein belongs to the UvrC family. Interacts with UvrB in an incision complex.

It is found in the cytoplasm. In terms of biological role, the UvrABC repair system catalyzes the recognition and processing of DNA lesions. UvrC both incises the 5' and 3' sides of the lesion. The N-terminal half is responsible for the 3' incision and the C-terminal half is responsible for the 5' incision. In Histophilus somni (strain 2336) (Haemophilus somnus), this protein is UvrABC system protein C.